The following is a 156-amino-acid chain: Small ribosomal subunit protein uS7 (156 aa).

It belongs to the universal ribosomal protein uS7 family. Part of the 30S ribosomal subunit. Contacts proteins S9 and S11.

In terms of biological role, one of the primary rRNA binding proteins, it binds directly to 16S rRNA where it nucleates assembly of the head domain of the 30S subunit. Is located at the subunit interface close to the decoding center, probably blocks exit of the E-site tRNA. The sequence is that of Small ribosomal subunit protein uS7 from Shewanella sp. (strain MR-7).